Here is a 127-residue protein sequence, read N- to C-terminus: Small ribosomal subunit protein eS8 (127 aa).

It belongs to the eukaryotic ribosomal protein eS8 family. As to quaternary structure, part of the 30S ribosomal subunit.

The polypeptide is Small ribosomal subunit protein eS8 (rps8e) (Pyrococcus abyssi (strain GE5 / Orsay)).